The sequence spans 35 residues: Photosystem II reaction center protein T (35 aa).

A helical membrane pass occupies residues 3–23 (ALVYTFLLVSTLGIIFFAIFF).

It belongs to the PsbT family. As to quaternary structure, PSII is composed of 1 copy each of membrane proteins PsbA, PsbB, PsbC, PsbD, PsbE, PsbF, PsbH, PsbI, PsbJ, PsbK, PsbL, PsbM, PsbT, PsbY, PsbZ, Psb30/Ycf12, at least 3 peripheral proteins of the oxygen-evolving complex and a large number of cofactors. It forms dimeric complexes.

The protein localises to the plastid. It is found in the chloroplast thylakoid membrane. Functionally, found at the monomer-monomer interface of the photosystem II (PS II) dimer, plays a role in assembly and dimerization of PSII. PSII is a light-driven water plastoquinone oxidoreductase, using light energy to abstract electrons from H(2)O, generating a proton gradient subsequently used for ATP formation. In Oenothera argillicola (Appalachian evening primrose), this protein is Photosystem II reaction center protein T.